Reading from the N-terminus, the 291-residue chain is Ribosomal RNA small subunit methyltransferase A (291 aa).

6 residues coordinate S-adenosyl-L-methionine: histidine 37, leucine 39, glycine 64, glutamate 85, aspartate 110, and asparagine 131.

The protein belongs to the class I-like SAM-binding methyltransferase superfamily. rRNA adenine N(6)-methyltransferase family. RsmA subfamily.

It is found in the cytoplasm. It catalyses the reaction adenosine(1518)/adenosine(1519) in 16S rRNA + 4 S-adenosyl-L-methionine = N(6)-dimethyladenosine(1518)/N(6)-dimethyladenosine(1519) in 16S rRNA + 4 S-adenosyl-L-homocysteine + 4 H(+). Its function is as follows. Specifically dimethylates two adjacent adenosines (A1518 and A1519) in the loop of a conserved hairpin near the 3'-end of 16S rRNA in the 30S particle. May play a critical role in biogenesis of 30S subunits. The sequence is that of Ribosomal RNA small subunit methyltransferase A from Dehalococcoides mccartyi (strain ATCC BAA-2266 / KCTC 15142 / 195) (Dehalococcoides ethenogenes (strain 195)).